The chain runs to 106 residues: L-rhamnose mutarotase (106 aa).

Residue Tyr20 coordinates substrate. His24 functions as the Proton donor in the catalytic mechanism. Residues Tyr43 and 78–79 (WW) contribute to the substrate site.

It belongs to the rhamnose mutarotase family. As to quaternary structure, homodimer.

It is found in the cytoplasm. The enzyme catalyses alpha-L-rhamnose = beta-L-rhamnose. It functions in the pathway carbohydrate metabolism; L-rhamnose metabolism. Functionally, involved in the anomeric conversion of L-rhamnose. The sequence is that of L-rhamnose mutarotase from Rhizobium etli (strain ATCC 51251 / DSM 11541 / JCM 21823 / NBRC 15573 / CFN 42).